The following is a 316-amino-acid chain: 4-hydroxy-3-methylbut-2-enyl diphosphate reductase (316 aa).

Position 12 (Cys-12) interacts with [4Fe-4S] cluster. The (2E)-4-hydroxy-3-methylbut-2-enyl diphosphate site is built by His-41 and His-74. Dimethylallyl diphosphate-binding residues include His-41 and His-74. Positions 41 and 74 each coordinate isopentenyl diphosphate. Position 96 (Cys-96) interacts with [4Fe-4S] cluster. His-124 contacts (2E)-4-hydroxy-3-methylbut-2-enyl diphosphate. His-124 serves as a coordination point for dimethylallyl diphosphate. His-124 contributes to the isopentenyl diphosphate binding site. Glu-126 functions as the Proton donor in the catalytic mechanism. (2E)-4-hydroxy-3-methylbut-2-enyl diphosphate is bound at residue Thr-167. Residue Cys-197 participates in [4Fe-4S] cluster binding. The (2E)-4-hydroxy-3-methylbut-2-enyl diphosphate site is built by Ser-225, Ser-226, Asn-227, and Ser-269. Residues Ser-225, Ser-226, Asn-227, and Ser-269 each contribute to the dimethylallyl diphosphate site. Residues Ser-225, Ser-226, Asn-227, and Ser-269 each contribute to the isopentenyl diphosphate site.

The protein belongs to the IspH family. In terms of assembly, homodimer. [4Fe-4S] cluster is required as a cofactor.

It carries out the reaction isopentenyl diphosphate + 2 oxidized [2Fe-2S]-[ferredoxin] + H2O = (2E)-4-hydroxy-3-methylbut-2-enyl diphosphate + 2 reduced [2Fe-2S]-[ferredoxin] + 2 H(+). The catalysed reaction is dimethylallyl diphosphate + 2 oxidized [2Fe-2S]-[ferredoxin] + H2O = (2E)-4-hydroxy-3-methylbut-2-enyl diphosphate + 2 reduced [2Fe-2S]-[ferredoxin] + 2 H(+). It functions in the pathway isoprenoid biosynthesis; dimethylallyl diphosphate biosynthesis; dimethylallyl diphosphate from (2E)-4-hydroxy-3-methylbutenyl diphosphate: step 1/1. The protein operates within isoprenoid biosynthesis; isopentenyl diphosphate biosynthesis via DXP pathway; isopentenyl diphosphate from 1-deoxy-D-xylulose 5-phosphate: step 6/6. In terms of biological role, catalyzes the conversion of 1-hydroxy-2-methyl-2-(E)-butenyl 4-diphosphate (HMBPP) into a mixture of isopentenyl diphosphate (IPP) and dimethylallyl diphosphate (DMAPP). Acts in the terminal step of the DOXP/MEP pathway for isoprenoid precursor biosynthesis. This Escherichia coli O6:H1 (strain CFT073 / ATCC 700928 / UPEC) protein is 4-hydroxy-3-methylbut-2-enyl diphosphate reductase.